A 333-amino-acid polypeptide reads, in one-letter code: Ketol-acid reductoisomerase (NADP(+)) (333 aa).

The region spanning 1–181 (MKVYYDQDAD…GGARSGVIET (181 aa)) is the KARI N-terminal Rossmann domain. NADP(+)-binding positions include 24–27 (YGSQ), arginine 47, and 82–85 (DEVQ). Residue histidine 107 is part of the active site. Glycine 133 lines the NADP(+) pocket. Positions 182-327 (TFREETETDL…KELRSMMPWL (146 aa)) constitute a KARI C-terminal knotted domain. Mg(2+) is bound by residues aspartate 190, glutamate 194, glutamate 226, and glutamate 230. Serine 251 lines the substrate pocket.

It belongs to the ketol-acid reductoisomerase family. Mg(2+) serves as cofactor.

The enzyme catalyses (2R)-2,3-dihydroxy-3-methylbutanoate + NADP(+) = (2S)-2-acetolactate + NADPH + H(+). It catalyses the reaction (2R,3R)-2,3-dihydroxy-3-methylpentanoate + NADP(+) = (S)-2-ethyl-2-hydroxy-3-oxobutanoate + NADPH + H(+). It participates in amino-acid biosynthesis; L-isoleucine biosynthesis; L-isoleucine from 2-oxobutanoate: step 2/4. Its pathway is amino-acid biosynthesis; L-valine biosynthesis; L-valine from pyruvate: step 2/4. Its function is as follows. Involved in the biosynthesis of branched-chain amino acids (BCAA). Catalyzes an alkyl-migration followed by a ketol-acid reduction of (S)-2-acetolactate (S2AL) to yield (R)-2,3-dihydroxy-isovalerate. In the isomerase reaction, S2AL is rearranged via a Mg-dependent methyl migration to produce 3-hydroxy-3-methyl-2-ketobutyrate (HMKB). In the reductase reaction, this 2-ketoacid undergoes a metal-dependent reduction by NADPH to yield (R)-2,3-dihydroxy-isovalerate. The protein is Ketol-acid reductoisomerase (NADP(+)) of Desulfovibrio desulfuricans (strain ATCC 27774 / DSM 6949 / MB).